A 308-amino-acid polypeptide reads, in one-letter code: Lipoyl synthase (308 aa).

Residues Cys-48, Cys-53, Cys-59, Cys-74, Cys-78, Cys-81, and Ser-287 each coordinate [4Fe-4S] cluster. The Radical SAM core domain maps to 60-277; the sequence is WSRHTATYLA…RSVGEALGLF (218 aa).

Belongs to the radical SAM superfamily. Lipoyl synthase family. [4Fe-4S] cluster is required as a cofactor.

The protein resides in the cytoplasm. The enzyme catalyses [[Fe-S] cluster scaffold protein carrying a second [4Fe-4S](2+) cluster] + N(6)-octanoyl-L-lysyl-[protein] + 2 oxidized [2Fe-2S]-[ferredoxin] + 2 S-adenosyl-L-methionine + 4 H(+) = [[Fe-S] cluster scaffold protein] + N(6)-[(R)-dihydrolipoyl]-L-lysyl-[protein] + 4 Fe(3+) + 2 hydrogen sulfide + 2 5'-deoxyadenosine + 2 L-methionine + 2 reduced [2Fe-2S]-[ferredoxin]. The protein operates within protein modification; protein lipoylation via endogenous pathway; protein N(6)-(lipoyl)lysine from octanoyl-[acyl-carrier-protein]: step 2/2. Catalyzes the radical-mediated insertion of two sulfur atoms into the C-6 and C-8 positions of the octanoyl moiety bound to the lipoyl domains of lipoate-dependent enzymes, thereby converting the octanoylated domains into lipoylated derivatives. This is Lipoyl synthase from Chlamydia muridarum (strain MoPn / Nigg).